Here is a 504-residue protein sequence, read N- to C-terminus: Maturase K (504 aa).

It belongs to the intron maturase 2 family. MatK subfamily.

Its subcellular location is the plastid. The protein resides in the chloroplast. Its function is as follows. Usually encoded in the trnK tRNA gene intron. Probably assists in splicing its own and other chloroplast group II introns. This chain is Maturase K, found in Pentaplaris doroteae.